The chain runs to 257 residues: AT-hook motif nuclear-localized protein 16 (257 aa).

A disordered region spans residues 1–71; sequence MAGGTALTPT…SKNKPKPPII (71 aa). Positions 53–65 form a DNA-binding region, a.T hook; that stretch reads KRPRGRPAGSKNK. Positions 77–214 constitute a PPC domain; sequence PNSLRANAVE…DEAASMQNQQ (138 aa).

As to quaternary structure, interacts with FVE/MSI4 and MSI5 which are components of HDAC corepressor complexes. Preferentially expressed in the inflorescence meristem and young floral buds, as well as in seedling-stage vegetative meristems. Widely expressed in flowers, roots and stems, with relatively low expression in leaves.

It is found in the nucleus. Its function is as follows. Transcription factor that specifically binds AT-rich DNA sequences related to the nuclear matrix attachment regions (MARs). Encodes a nuclear matrix protein that acts in the maintenance of genomic integrity by silencing TEs and repeat-containing genes through epigenetic machinery. Acts as a chromatin remodeling factor that modifies the architecture of FLC and FWA chromatin by modulating both H3 acetylation and methylation leading to the regulation of FLC and FWA expression. Negatively regulates floral repressors including MAF4 and MAF5. Plays a transcription activation role in anther development. Regulates the expression of arabinogalactan proteins (AGPs) involved in the formation of the nexine layer of the pollen wall. Binds AGP6, AGP11, AGP23 and AGP40 promoters. This chain is AT-hook motif nuclear-localized protein 16, found in Arabidopsis thaliana (Mouse-ear cress).